The primary structure comprises 1316 residues: DNA-directed RNA polymerase subunit beta' (1316 aa).

Residues C60, C62, C75, and C78 each coordinate Zn(2+). Positions 535, 537, and 539 each coordinate Mg(2+). Zn(2+) is bound by residues C891, C968, C975, and C978.

Belongs to the RNA polymerase beta' chain family. The RNAP catalytic core consists of 2 alpha, 1 beta, 1 beta' and 1 omega subunit. When a sigma factor is associated with the core the holoenzyme is formed, which can initiate transcription. Mg(2+) serves as cofactor. Requires Zn(2+) as cofactor.

The enzyme catalyses RNA(n) + a ribonucleoside 5'-triphosphate = RNA(n+1) + diphosphate. Its function is as follows. DNA-dependent RNA polymerase catalyzes the transcription of DNA into RNA using the four ribonucleoside triphosphates as substrates. This Mycobacterium tuberculosis (strain CDC 1551 / Oshkosh) protein is DNA-directed RNA polymerase subunit beta'.